Here is a 357-residue protein sequence, read N- to C-terminus: Eugenol O-methyltransferase (357 aa).

Residues Gly-203, Asp-226, Asp-246, Met-247, and Lys-260 each coordinate S-adenosyl-L-methionine. The active-site Proton acceptor is the His-264.

This sequence belongs to the class I-like SAM-binding methyltransferase superfamily. Cation-independent O-methyltransferase family. COMT subfamily. As to expression, specifically expressed in the peltate glandular trichomes on the surface of the young basil leaves.

It catalyses the reaction (E)-isoeugenol + S-adenosyl-L-methionine = (E)-isomethyleugenol + S-adenosyl-L-homocysteine + H(+). Its pathway is aromatic compound metabolism; phenylpropanoid biosynthesis. Its function is as follows. Phenylpropene O-methyltransferase that catalyzes the methylation of the para-4-hydroxyl of eugenol to methyleugenol. Can also convert chavicol to methylchavicol but with less affinity. This is Eugenol O-methyltransferase (EOMT1) from Ocimum basilicum (Sweet basil).